Reading from the N-terminus, the 440-residue chain is Thymidine phosphorylase (440 aa).

The protein belongs to the thymidine/pyrimidine-nucleoside phosphorylase family. Homodimer.

The enzyme catalyses thymidine + phosphate = 2-deoxy-alpha-D-ribose 1-phosphate + thymine. It functions in the pathway pyrimidine metabolism; dTMP biosynthesis via salvage pathway; dTMP from thymine: step 1/2. In terms of biological role, the enzymes which catalyze the reversible phosphorolysis of pyrimidine nucleosides are involved in the degradation of these compounds and in their utilization as carbon and energy sources, or in the rescue of pyrimidine bases for nucleotide synthesis. In Serratia proteamaculans (strain 568), this protein is Thymidine phosphorylase.